A 612-amino-acid chain; its full sequence is Dihydroxy-acid dehydratase (612 aa).

D81 contacts Mg(2+). C122 is a [2Fe-2S] cluster binding site. D123 and K124 together coordinate Mg(2+). At K124 the chain carries N6-carboxylysine. Residue C195 coordinates [2Fe-2S] cluster. Residue E491 participates in Mg(2+) binding. S517 acts as the Proton acceptor in catalysis.

It belongs to the IlvD/Edd family. Homodimer. [2Fe-2S] cluster is required as a cofactor. Requires Mg(2+) as cofactor.

It catalyses the reaction (2R)-2,3-dihydroxy-3-methylbutanoate = 3-methyl-2-oxobutanoate + H2O. It carries out the reaction (2R,3R)-2,3-dihydroxy-3-methylpentanoate = (S)-3-methyl-2-oxopentanoate + H2O. It participates in amino-acid biosynthesis; L-isoleucine biosynthesis; L-isoleucine from 2-oxobutanoate: step 3/4. It functions in the pathway amino-acid biosynthesis; L-valine biosynthesis; L-valine from pyruvate: step 3/4. Its function is as follows. Functions in the biosynthesis of branched-chain amino acids. Catalyzes the dehydration of (2R,3R)-2,3-dihydroxy-3-methylpentanoate (2,3-dihydroxy-3-methylvalerate) into 2-oxo-3-methylpentanoate (2-oxo-3-methylvalerate) and of (2R)-2,3-dihydroxy-3-methylbutanoate (2,3-dihydroxyisovalerate) into 2-oxo-3-methylbutanoate (2-oxoisovalerate), the penultimate precursor to L-isoleucine and L-valine, respectively. The sequence is that of Dihydroxy-acid dehydratase from Rhizobium etli (strain CIAT 652).